Consider the following 144-residue polypeptide: Large ribosomal subunit protein uL11 (144 aa).

This sequence belongs to the universal ribosomal protein uL11 family. As to quaternary structure, part of the ribosomal stalk of the 50S ribosomal subunit. Interacts with L10 and the large rRNA to form the base of the stalk. L10 forms an elongated spine to which L12 dimers bind in a sequential fashion forming a multimeric L10(L12)X complex. One or more lysine residues are methylated.

Functionally, forms part of the ribosomal stalk which helps the ribosome interact with GTP-bound translation factors. The polypeptide is Large ribosomal subunit protein uL11 (Streptomyces avermitilis (strain ATCC 31267 / DSM 46492 / JCM 5070 / NBRC 14893 / NCIMB 12804 / NRRL 8165 / MA-4680)).